Here is a 213-residue protein sequence, read N- to C-terminus: Orotate phosphoribosyltransferase (213 aa).

Lys-26 is a binding site for 5-phospho-alpha-D-ribose 1-diphosphate. 34–35 (FF) serves as a coordination point for orotate. 5-phospho-alpha-D-ribose 1-diphosphate contacts are provided by residues 72-73 (YK), Arg-99, Lys-100, Lys-103, His-105, and 124-132 (DDVITAGTA). Thr-128 and Arg-156 together coordinate orotate.

This sequence belongs to the purine/pyrimidine phosphoribosyltransferase family. PyrE subfamily. In terms of assembly, homodimer. Requires Mg(2+) as cofactor.

The enzyme catalyses orotidine 5'-phosphate + diphosphate = orotate + 5-phospho-alpha-D-ribose 1-diphosphate. Its pathway is pyrimidine metabolism; UMP biosynthesis via de novo pathway; UMP from orotate: step 1/2. Catalyzes the transfer of a ribosyl phosphate group from 5-phosphoribose 1-diphosphate to orotate, leading to the formation of orotidine monophosphate (OMP). The polypeptide is Orotate phosphoribosyltransferase (Vibrio vulnificus (strain YJ016)).